The chain runs to 2696 residues: Protein ILITYHIA (2696 aa).

A compositionally biased stretch (polar residues) spans M1–A18. The interval M1–P26 is disordered. 9 HEAT repeats span residues D162–F204, S253–L290, K303–N340, E364–S400, K401–N438, S487–V525, A526–T562, S564–A601, and V642–C677. Residues K901 to K941 form a disordered region. Residues G923–K941 show a composition bias toward basic and acidic residues. 18 HEAT repeats span residues H985–Q1021, D1082–A1118, H1188–S1225, K1273–K1311, S1315–R1355, P1358–E1395, A1397–I1433, L1436–K1474, P1478–A1515, Y1516–Q1553, P1564–N1600, P1601–D1638, P1640–E1677, P1683–E1720, N1722–T1759, Y1761–A1797, K1801–T1838, and S1840–G1876. S1887 bears the Phosphoserine mark. 19 HEAT repeats span residues D1908–K1945, E1949–E1986, V1988–R2024, S2029–L2066, Q2067–A2102, V2104–N2137, T2138–E2175, G2177–L2213, D2217–K2254, P2258–P2292, K2293–E2330, E2335–M2373, P2377–R2414, D2416–K2450, A2455–A2492, Q2494–S2530, S2536–A2573, K2580–S2617, and M2620–G2658.

Belongs to the GCN1 family.

In terms of biological role, involved in immunity against bacterial infection and in non-host resistance. Required for embryo development. Required for systemic acquired resistance, but functions in an salicylic acid-independent manner. Required for bacterium-triggered stomatal closure response. The polypeptide is Protein ILITYHIA (Arabidopsis thaliana (Mouse-ear cress)).